We begin with the raw amino-acid sequence, 491 residues long: Probable glycine dehydrogenase (decarboxylating) subunit 2 (491 aa).

Lysine 273 carries the N6-(pyridoxal phosphate)lysine modification.

This sequence belongs to the GcvP family. C-terminal subunit subfamily. The glycine cleavage system is composed of four proteins: P, T, L and H. In this organism, the P 'protein' is a heterodimer of two subunits. Requires pyridoxal 5'-phosphate as cofactor.

It carries out the reaction N(6)-[(R)-lipoyl]-L-lysyl-[glycine-cleavage complex H protein] + glycine + H(+) = N(6)-[(R)-S(8)-aminomethyldihydrolipoyl]-L-lysyl-[glycine-cleavage complex H protein] + CO2. The glycine cleavage system catalyzes the degradation of glycine. The P protein binds the alpha-amino group of glycine through its pyridoxal phosphate cofactor; CO(2) is released and the remaining methylamine moiety is then transferred to the lipoamide cofactor of the H protein. The polypeptide is Probable glycine dehydrogenase (decarboxylating) subunit 2 (Bacillus cereus (strain AH187)).